The sequence spans 582 residues: Formate--tetrahydrofolate ligase (582 aa).

Residue 65–72 participates in ATP binding; it reads TPLGEGKT.

Belongs to the formate--tetrahydrofolate ligase family.

It catalyses the reaction (6S)-5,6,7,8-tetrahydrofolate + formate + ATP = (6R)-10-formyltetrahydrofolate + ADP + phosphate. The protein operates within one-carbon metabolism; tetrahydrofolate interconversion. The protein is Formate--tetrahydrofolate ligase of Vibrio vulnificus (strain CMCP6).